Reading from the N-terminus, the 516-residue chain is MALSQSVPFSATELLLASAIFCLVFWVLKGLRPRVPKGLKSPPEPWGWPLLGHVLTLRKNPHLALSRMSQRYGDVLQIRIGSTPVLVLSGLDTIRQALVRQGDDFKGRPDLYSSTLITDGQSLTFSPDSGPVWAARRHLAQNALNTFSIASDPASSYSCYLEEHVSKEAEALISRLQELMAGPGHFDPYNQVVVSVVNVIGAMCFGQHFPESSDEMLSLVKNTHEFVETASSGNPVDFFPILRYLPNPALQRFKAFNQRFLRFLRKTVQEHYQDFDKNSVQDIMGALFKYSKKGPRASGNLIPQEKIVNLVNDIFGAGFDTVTTAISWSLMYLVTKPEIQRKIQKELDTMIGRGRRPRLSDRPQLPYLKAFILETFRHSSFLPFTIPHSTTRDTTLNGFYIPKECCVFVNQWQVNHDPELWEDPSEFWPERFLTTDGTAINKPLSEKVMLFGMGKRRCIGEVLANWEVFLFLAILLQQLEFSVPPGVKVDLTPIYGLTMKHARCEHVQARLRFSIK.

The O-linked (GlcNAc) serine glycan is linked to S69. F226 serves as a coordination point for substrate. C458 contributes to the heme binding site.

Belongs to the cytochrome P450 family. In terms of assembly, interacts with PGRMC1; the interaction requires PGRMC1 homodimerization. Heme is required as a cofactor.

It is found in the endoplasmic reticulum membrane. The protein resides in the microsome membrane. The enzyme catalyses an organic molecule + reduced [NADPH--hemoprotein reductase] + O2 = an alcohol + oxidized [NADPH--hemoprotein reductase] + H2O + H(+). The catalysed reaction is 17beta-estradiol + reduced [NADPH--hemoprotein reductase] + O2 = 2-hydroxy-17beta-estradiol + oxidized [NADPH--hemoprotein reductase] + H2O + H(+). It carries out the reaction 17beta-estradiol + reduced [NADPH--hemoprotein reductase] + O2 = 4-hydroxy-17beta-estradiol + oxidized [NADPH--hemoprotein reductase] + H2O + H(+). It catalyses the reaction estrone + reduced [NADPH--hemoprotein reductase] + O2 = 2-hydroxyestrone + oxidized [NADPH--hemoprotein reductase] + H2O + H(+). The enzyme catalyses estrone + reduced [NADPH--hemoprotein reductase] + O2 = 4-hydroxyestrone + oxidized [NADPH--hemoprotein reductase] + H2O + H(+). The catalysed reaction is cholesterol + reduced [NADPH--hemoprotein reductase] + O2 = 25-hydroxycholesterol + oxidized [NADPH--hemoprotein reductase] + H2O + H(+). It carries out the reaction all-trans-retinol + reduced [NADPH--hemoprotein reductase] + O2 = all-trans-retinal + oxidized [NADPH--hemoprotein reductase] + 2 H2O + H(+). It catalyses the reaction all-trans-retinal + reduced [NADPH--hemoprotein reductase] + O2 = all-trans-retinoate + oxidized [NADPH--hemoprotein reductase] + H2O + 2 H(+). The enzyme catalyses (5Z,8Z,11Z,14Z)-eicosatetraenoate + reduced [NADPH--hemoprotein reductase] + O2 = (14R,15S)-epoxy-(5Z,8Z,11Z)-eicosatrienoate + oxidized [NADPH--hemoprotein reductase] + H2O + H(+). The catalysed reaction is (5Z,8Z,11Z,14Z)-eicosatetraenoate + reduced [NADPH--hemoprotein reductase] + O2 = (14S,15R)-epoxy-(5Z,8Z,11Z)-eicosatrienoate + oxidized [NADPH--hemoprotein reductase] + H2O + H(+). It carries out the reaction (5Z,8Z,11Z,14Z,17Z)-eicosapentaenoate + reduced [NADPH--hemoprotein reductase] + O2 = (17R,18S)-epoxy-(5Z,8Z,11Z,14Z)-eicosatetraenoate + oxidized [NADPH--hemoprotein reductase] + H2O + H(+). It catalyses the reaction (4Z,7Z,10Z,13Z,16Z,19Z)-docosahexaenoate + reduced [NADPH--hemoprotein reductase] + O2 = (19R,20S)-epoxy-(4Z,7Z,10Z,13Z,16Z)-docosapentaenoate + oxidized [NADPH--hemoprotein reductase] + H2O + H(+). The enzyme catalyses (5S)-hydroperoxy-(6E,8Z,11Z,14Z)-eicosatetraenoate = 5-oxo-(6E,8Z,11Z,14Z)-eicosatetraenoate + H2O. The catalysed reaction is (12S)-hydroperoxy-(5Z,8Z,10E,14Z)-eicosatetraenoate = 12-oxo-(5Z,8Z,10E,14Z)-eicosatetraenoate + H2O. It carries out the reaction (15S)-hydroperoxy-(5Z,8Z,11Z,13E)-eicosatetraenoate = 15-oxo-(5Z,8Z,11Z,13E)-eicosatetraenoate + H2O. It catalyses the reaction (13S)-hydroperoxy-(9Z,11E)-octadecadienoate = 13-oxo-(9Z,11E)-octadecadienoate + H2O. The enzyme catalyses (5Z,8Z,11Z,14Z)-eicosatetraenoate + reduced [NADPH--hemoprotein reductase] + O2 = 13-hydroxy-(5Z,8Z,11Z,14Z)-eicosatetraenoate + oxidized [NADPH--hemoprotein reductase] + H2O + H(+). The catalysed reaction is (5Z,8Z,11Z,14Z)-eicosatetraenoate + reduced [NADPH--hemoprotein reductase] + O2 = 19-hydroxy-(5Z,8Z,11Z,14Z)-eicosatetraenoate + oxidized [NADPH--hemoprotein reductase] + H2O + H(+). It carries out the reaction (9Z,12Z)-octadecadienoate + reduced [NADPH--hemoprotein reductase] + O2 = 11-hydroxy-(9Z,12Z)-octadecadienoate + oxidized [NADPH--hemoprotein reductase] + H2O + H(+). It participates in cofactor metabolism; retinol metabolism. Its pathway is steroid metabolism; cholesterol metabolism. The protein operates within lipid metabolism; arachidonate metabolism. In terms of biological role, a cytochrome P450 monooxygenase involved in the metabolism of various endogenous substrates, including fatty acids, steroid hormones and vitamins. Mechanistically, uses molecular oxygen inserting one oxygen atom into a substrate, and reducing the second into a water molecule, with two electrons provided by NADPH via cytochrome P450 reductase (NADPH--hemoprotein reductase). Catalyzes the hydroxylation of carbon-hydrogen bonds. Exhibits high catalytic activity for the formation of hydroxyestrogens from estrone (E1) and 17beta-estradiol (E2), namely 2-hydroxy E1 and E2. Metabolizes cholesterol toward 25-hydroxycholesterol, a physiological regulator of cellular cholesterol homeostasis. May act as a major enzyme for all-trans retinoic acid biosynthesis in the liver. Catalyzes two successive oxidative transformation of all-trans retinol to all-trans retinal and then to the active form all-trans retinoic acid. Primarily catalyzes stereoselective epoxidation of the last double bond of polyunsaturated fatty acids (PUFA), displaying a strong preference for the (R,S) stereoisomer. Catalyzes bisallylic hydroxylation and omega-1 hydroxylation of PUFA. May also participate in eicosanoids metabolism by converting hydroperoxide species into oxo metabolites (lipoxygenase-like reaction, NADPH-independent). Plays a role in the oxidative metabolism of xenobiotics. Catalyzes the N-hydroxylation of heterocyclic amines and the O-deethylation of phenacetin. Metabolizes caffeine via N3-demethylation. The protein is Cytochrome P450 1A2 (CYP1A2) of Pongo abelii (Sumatran orangutan).